We begin with the raw amino-acid sequence, 91 residues long: Small ribosomal subunit protein uS19 (91 aa).

Belongs to the universal ribosomal protein uS19 family.

Protein S19 forms a complex with S13 that binds strongly to the 16S ribosomal RNA. This Opitutus terrae (strain DSM 11246 / JCM 15787 / PB90-1) protein is Small ribosomal subunit protein uS19.